A 123-amino-acid chain; its full sequence is Small ribosomal subunit protein uS12 (123 aa).

Asp-89 is modified (3-methylthioaspartic acid). A disordered region spans residues 100-123; sequence GSLDTSGVKDRKQGRSKYGTKRPK. Over residues 113 to 123 the composition is skewed to basic residues; the sequence is GRSKYGTKRPK.

Belongs to the universal ribosomal protein uS12 family. Part of the 30S ribosomal subunit. Contacts proteins S8 and S17. May interact with IF1 in the 30S initiation complex.

Its function is as follows. With S4 and S5 plays an important role in translational accuracy. In terms of biological role, interacts with and stabilizes bases of the 16S rRNA that are involved in tRNA selection in the A site and with the mRNA backbone. Located at the interface of the 30S and 50S subunits, it traverses the body of the 30S subunit contacting proteins on the other side and probably holding the rRNA structure together. The combined cluster of proteins S8, S12 and S17 appears to hold together the shoulder and platform of the 30S subunit. This chain is Small ribosomal subunit protein uS12, found in Ectopseudomonas mendocina (strain ymp) (Pseudomonas mendocina).